The primary structure comprises 358 residues: MGRKQQYGTLASIAAKLGISRTTVSNAYNRPEQLSAELRQRILDTAEDMGYLGPDPVARSLRTRRAGAIGVLLTEDLTYAFEDMASVDFLAGVAQAAGDTQLTLIPASPASSVDHVSAQQLVNNAAVDGVVIYSVAKGDPHIDAIRARGLPAVIADQPAREEGMPFIAPNNRKAIAPAAQALIDAGHRKIGILSIRLDRANNDGEVTRERLENAQYQVQRDRVRGAMEVFIEAGIDPGTVPIMECWINNRQHNFEVAKELLETHPDLTAVLCTVDALAFGVLEYLKSVGKSAPADLSLTGFDGTHMALARDLTTVIQPNKLKGFKAGETLLKMIDKEYVEPEVELETSFHPGSTVAPI.

The 56-residue stretch at 8–63 (GTLASIAAKLGISRTTVSNAYNRPEQLSAELRQRILDTAEDMGYLGPDPVARSLRT) folds into the HTH lacI-type domain. The H-T-H motif DNA-binding region spans 10–29 (LASIAAKLGISRTTVSNAYN).

Homodimer.

With respect to regulation, myo-inositol causes the dissociation of the IpsA-DNA complex in vitro. Plays a role in the regulation of cell wall biogenesis. Inositol-dependent transcriptional activator of ino1, which encodes inositol phosphate synthase. Also regulates other target genes, which are most likely involved in the synthesis of inositol-derived cell wall components and mycothiol. Acts by binding to a conserved palindromic motif within the promoter regions. This Corynebacterium glutamicum (strain ATCC 13032 / DSM 20300 / JCM 1318 / BCRC 11384 / CCUG 27702 / LMG 3730 / NBRC 12168 / NCIMB 10025 / NRRL B-2784 / 534) protein is HTH-type transcriptional regulator IpsA.